The following is a 338-amino-acid chain: Glyceraldehyde-3-phosphate dehydrogenase 1 (338 aa).

NAD(+) contacts are provided by residues 13–14 (TI) and Gly111. Position 140-142 (140-142 (SCN)) interacts with D-glyceraldehyde 3-phosphate. Cys141 acts as the Nucleophile in catalysis. NAD(+) is bound at residue Arg169. Position 195-196 (195-196 (HG)) interacts with D-glyceraldehyde 3-phosphate. Residue Gln300 coordinates NAD(+).

This sequence belongs to the glyceraldehyde-3-phosphate dehydrogenase family. Homotetramer.

It is found in the cytoplasm. It catalyses the reaction D-glyceraldehyde 3-phosphate + phosphate + NADP(+) = (2R)-3-phospho-glyceroyl phosphate + NADPH + H(+). It carries out the reaction D-glyceraldehyde 3-phosphate + phosphate + NAD(+) = (2R)-3-phospho-glyceroyl phosphate + NADH + H(+). The protein operates within carbohydrate degradation; glycolysis; pyruvate from D-glyceraldehyde 3-phosphate: step 1/5. The polypeptide is Glyceraldehyde-3-phosphate dehydrogenase 1 (Methanosarcina barkeri (strain Fusaro / DSM 804)).